Here is a 559-residue protein sequence, read N- to C-terminus: Cytoplasmic polyadenylation element-binding protein 1 (559 aa).

Positions 222–243 are disordered; the sequence is SRMDHSSSPLTPPPSASPSGSL. RRM domains follow at residues 304-401 and 423-504; these read CKVF…DAQV and NTVF…PYLE. 8 residues coordinate Zn(2+): C508, C511, C520, C525, C530, C533, H538, and H546.

Belongs to the RRM CPEB family. In terms of tissue distribution, expressed in oocytes (at protein level). During oocyte maturation becomes detectable at stage Ib, and remains ubiquitously distributed within the oocyte cytoplasm until stage II. It then follows a gradual accumulation to the future animal pole during stage III, and remains localized to this pole at stage IV (at protein level). Expressed in oocytes, blastomeres and pre-mid-blastula transition embryos. Its expression during oogenesis is ubiquitous at stages I and II, but gradually accumulated at the periphery of the oocyte in the presumptive animal pole during stage III. Expression was maintained in that region at stage IV, and then became delocalized at stage V to cover a much broader area presumably encompassing the future blastodisc.

The protein resides in the cytoplasm. Its function is as follows. Sequence-specific RNA-binding protein that regulates mRNA cytoplasmic polyadenylation and translation initiation during oocyte maturation and early development. Binds to the cytoplasmic polyadenylation element (CPE), an uridine-rich sequence element (consensus sequence 5'-UUUUUAU-3') within the mRNA 3'-UTR. This chain is Cytoplasmic polyadenylation element-binding protein 1 (cpeb1), found in Danio rerio (Zebrafish).